Reading from the N-terminus, the 252-residue chain is Large ribosomal subunit protein uL29m (252 aa).

A mitochondrion-targeting transit peptide spans 1–39 (MSTSTVIRPVARSLLQLRKAGNTPPAFLLPCLQSSSTTS). A compositionally biased stretch (acidic residues) spans 233–242 (EDVLAEAEGE). A disordered region spans residues 233–252 (EDVLAEAEGEAEPKPAQVTA).

It belongs to the universal ribosomal protein uL29 family. In terms of assembly, component of the mitochondrial large ribosomal subunit. Mature mitochondrial ribosomes consist of a small (37S) and a large (54S) subunit. The 37S subunit contains at least 33 different proteins and 1 molecule of RNA (15S). The 54S subunit contains at least 45 different proteins and 1 molecule of RNA (21S).

Its subcellular location is the mitochondrion. The sequence is that of Large ribosomal subunit protein uL29m (mrpl4) from Botryotinia fuckeliana (strain B05.10) (Noble rot fungus).